A 273-amino-acid chain; its full sequence is Thiazole synthase (273 aa).

Residue K110 is the Schiff-base intermediate with DXP of the active site. 1-deoxy-D-xylulose 5-phosphate is bound by residues G171, 198–199, and 220–221; these read AG and NS.

The protein belongs to the ThiG family. Homotetramer. Forms heterodimers with either ThiH or ThiS.

The protein resides in the cytoplasm. The catalysed reaction is [ThiS sulfur-carrier protein]-C-terminal-Gly-aminoethanethioate + 2-iminoacetate + 1-deoxy-D-xylulose 5-phosphate = [ThiS sulfur-carrier protein]-C-terminal Gly-Gly + 2-[(2R,5Z)-2-carboxy-4-methylthiazol-5(2H)-ylidene]ethyl phosphate + 2 H2O + H(+). The protein operates within cofactor biosynthesis; thiamine diphosphate biosynthesis. Catalyzes the rearrangement of 1-deoxy-D-xylulose 5-phosphate (DXP) to produce the thiazole phosphate moiety of thiamine. Sulfur is provided by the thiocarboxylate moiety of the carrier protein ThiS. In vitro, sulfur can be provided by H(2)S. The sequence is that of Thiazole synthase from Hydrogenovibrio crunogenus (strain DSM 25203 / XCL-2) (Thiomicrospira crunogena).